The sequence spans 325 residues: D-alanine--D-alanine ligase (325 aa).

In terms of domain architecture, ATP-grasp spans 102–300; that stretch reads KQIFRAAGIP…FTELVERMLQ (199 aa). 130 to 185 contacts ATP; sequence AAELGSPLVIKPSNNGSTVGISIVRDERSFAQGLELARSVSSRIFLERYVPGKEIT. Positions 254, 267, and 269 each coordinate Mg(2+).

It belongs to the D-alanine--D-alanine ligase family. Mg(2+) serves as cofactor. The cofactor is Mn(2+).

Its subcellular location is the cytoplasm. It catalyses the reaction 2 D-alanine + ATP = D-alanyl-D-alanine + ADP + phosphate + H(+). It participates in cell wall biogenesis; peptidoglycan biosynthesis. Functionally, cell wall formation. This is D-alanine--D-alanine ligase from Synechococcus sp. (strain JA-2-3B'a(2-13)) (Cyanobacteria bacterium Yellowstone B-Prime).